Here is a 207-residue protein sequence, read N- to C-terminus: Galactoside O-acetyltransferase (207 aa).

Asn-87 is a binding site for acetyl-CoA. His-117 (proton donor/acceptor) is an active-site residue. Acetyl-CoA contacts are provided by residues Ala-144, Ala-162, 167–168 (TK), and Arg-185.

It belongs to the transferase hexapeptide repeat family. In terms of assembly, homotrimer.

It localises to the cytoplasm. The catalysed reaction is a beta-D-galactoside + acetyl-CoA = a 6-acetyl-beta-D-galactoside + CoA. This chain is Galactoside O-acetyltransferase (lacA), found in Lactococcus lactis subsp. lactis (strain IL1403) (Streptococcus lactis).